We begin with the raw amino-acid sequence, 452 residues long: UDP-N-acetylmuramoylalanine--D-glutamate ligase (452 aa).

Residue 115–121 participates in ATP binding; it reads GTNGKTT.

This sequence belongs to the MurCDEF family.

Its subcellular location is the cytoplasm. The enzyme catalyses UDP-N-acetyl-alpha-D-muramoyl-L-alanine + D-glutamate + ATP = UDP-N-acetyl-alpha-D-muramoyl-L-alanyl-D-glutamate + ADP + phosphate + H(+). Its pathway is cell wall biogenesis; peptidoglycan biosynthesis. In terms of biological role, cell wall formation. Catalyzes the addition of glutamate to the nucleotide precursor UDP-N-acetylmuramoyl-L-alanine (UMA). In Geobacter sp. (strain M21), this protein is UDP-N-acetylmuramoylalanine--D-glutamate ligase.